The following is a 358-amino-acid chain: MATH domain and coiled-coil domain-containing protein At3g58440 (358 aa).

An MATH domain is found at 8-131 (QDKFTWVLEK…NDRLTIVAEV (124 aa)). Residues 250–309 (LRDAGFKVDWLEKKLDQLKEKKEEEMSGLARLHEIEERLQKLKLLFVDLESQLQKEKVEA) are a coiled coil.

In Arabidopsis thaliana (Mouse-ear cress), this protein is MATH domain and coiled-coil domain-containing protein At3g58440.